The chain runs to 240 residues: Small ribosomal subunit protein uS2 (240 aa).

It belongs to the universal ribosomal protein uS2 family. In terms of assembly, component of the small ribosomal subunit. Mature ribosomes consist of a small (40S) and a large (60S) subunit. The 40S subunit contains about 33 different proteins and 1 molecule of RNA (18S). The 60S subunit contains about 49 different proteins and 3 molecules of RNA (25S, 5.8S and 5S). Interacts with RPS21.

The protein localises to the cytoplasm. In terms of biological role, required for the assembly and/or stability of the 40S ribosomal subunit. Required for the processing of the 20S rRNA-precursor to mature 18S rRNA in a late step of the maturation of 40S ribosomal subunits. The protein is Small ribosomal subunit protein uS2 of Enterocytozoon bieneusi (strain H348) (Microsporidian parasite).